The primary structure comprises 248 residues: Pyridoxine 5'-phosphate synthase (248 aa).

Residue Asn-12 coordinates 3-amino-2-oxopropyl phosphate. 14–15 (DH) provides a ligand contact to 1-deoxy-D-xylulose 5-phosphate. Residue Arg-23 coordinates 3-amino-2-oxopropyl phosphate. His-48 acts as the Proton acceptor in catalysis. The 1-deoxy-D-xylulose 5-phosphate site is built by Arg-50 and His-55. Glu-75 functions as the Proton acceptor in the catalytic mechanism. Thr-105 contacts 1-deoxy-D-xylulose 5-phosphate. His-199 functions as the Proton donor in the catalytic mechanism. Residues Gly-200 and 221–222 (GH) contribute to the 3-amino-2-oxopropyl phosphate site.

The protein belongs to the PNP synthase family. As to quaternary structure, homooctamer; tetramer of dimers.

It is found in the cytoplasm. It catalyses the reaction 3-amino-2-oxopropyl phosphate + 1-deoxy-D-xylulose 5-phosphate = pyridoxine 5'-phosphate + phosphate + 2 H2O + H(+). Its pathway is cofactor biosynthesis; pyridoxine 5'-phosphate biosynthesis; pyridoxine 5'-phosphate from D-erythrose 4-phosphate: step 5/5. Its function is as follows. Catalyzes the complicated ring closure reaction between the two acyclic compounds 1-deoxy-D-xylulose-5-phosphate (DXP) and 3-amino-2-oxopropyl phosphate (1-amino-acetone-3-phosphate or AAP) to form pyridoxine 5'-phosphate (PNP) and inorganic phosphate. This Jannaschia sp. (strain CCS1) protein is Pyridoxine 5'-phosphate synthase.